Here is a 102-residue protein sequence, read N- to C-terminus: MYAIIKTGGKQIKVEEGQTVYIEKLAAEAGETVTFEDVLFVGGDSVKVGNPTVAGATVTAKVEKQGRAKKITVFRYKPKKNVHKKQGHRQPYTKLTIEKINA.

Belongs to the bacterial ribosomal protein bL21 family. Part of the 50S ribosomal subunit. Contacts protein L20.

Functionally, this protein binds to 23S rRNA in the presence of protein L20. This chain is Large ribosomal subunit protein bL21, found in Bacillus velezensis (strain DSM 23117 / BGSC 10A6 / LMG 26770 / FZB42) (Bacillus amyloliquefaciens subsp. plantarum).